A 376-amino-acid polypeptide reads, in one-letter code: Glutamate 5-kinase (376 aa).

Lys17 provides a ligand contact to ATP. Substrate is bound by residues Ser57, Asp144, and Asn156. 176–177 provides a ligand contact to ATP; sequence TD. One can recognise a PUA domain in the interval 283-361; sequence KGQLVLDEGA…SEINQLLGYS (79 aa).

Belongs to the glutamate 5-kinase family.

Its subcellular location is the cytoplasm. The catalysed reaction is L-glutamate + ATP = L-glutamyl 5-phosphate + ADP. Its pathway is amino-acid biosynthesis; L-proline biosynthesis; L-glutamate 5-semialdehyde from L-glutamate: step 1/2. Functionally, catalyzes the transfer of a phosphate group to glutamate to form L-glutamate 5-phosphate. This Hydrogenovibrio crunogenus (strain DSM 25203 / XCL-2) (Thiomicrospira crunogena) protein is Glutamate 5-kinase.